Reading from the N-terminus, the 565-residue chain is MPSVNLIPSRKICLQNMINKDNVSVETIQSLLHSKQLPYFSDKRSFLLNLNCQVTDHSGRLIVCRHLASYWIAQFNKSSGHVDYHHFAFPDEIKNYVSVSEEEKAINVPAIIYFVENGSWGDIIFYIFNEMIFHSEKSRALEISTSNHNMALGLKIKETKNGGDFVIQLYDPNHTATHLRAEFNKFNLAKIKKLTVDNFLDEKHQKCYGLISDGMSIFVDRHTPTSMSSIIRWPDNLLHPKVIYHAMRMGLTELIQKVTRVVQLSDLSDNTLELLLAAKNDDGLSGLLLALQNGHSDTILAYGELLETSGLNLDKTVELLTAEGMGGRISGLSQALQNGHAETIKTYGRLLKKRAINIEYNKLKNLLTAYYYDEVHRQIPGLMFALQNGHADAIRAYGELILSPPLLNSEDIVNLLASRRYDNVPGLLLALNNGQADAILAYGDILNEAKLNLDKKAELLEAKDSNGLSGLFVALHNGCVETIIAYGKILHTADLTPHQASKLLAAEGPNGVSGLIIAFQNRNFEAIKTYMGIIKNENITPEEIAEHLDKKNGSDFLEIMKNIKS.

It belongs to the Toxin_15 family.

The protein resides in the secreted. Functionally, effector protease that disrupts necroptosis in host cells by mediating proteolytic cleavage of host RIPK1 and RIPK3. The sequence is that of Effector protease OspD3 from Shigella flexneri.